We begin with the raw amino-acid sequence, 58 residues long: Large ribosomal subunit protein bL32 (58 aa).

This sequence belongs to the bacterial ribosomal protein bL32 family.

This Anaplasma phagocytophilum (strain HZ) protein is Large ribosomal subunit protein bL32.